A 931-amino-acid chain; its full sequence is Protein translocase subunit SecA (931 aa).

Residues Q87, 105–109 (GEGKT), and D515 each bind ATP. Zn(2+) is bound by residues C915, C917, C926, and H927.

This sequence belongs to the SecA family. As to quaternary structure, monomer and homodimer. Part of the essential Sec protein translocation apparatus which comprises SecA, SecYEG and auxiliary proteins SecDF-YajC and YidC. Requires Zn(2+) as cofactor.

The protein localises to the cell inner membrane. The protein resides in the cytoplasm. It catalyses the reaction ATP + H2O + cellular proteinSide 1 = ADP + phosphate + cellular proteinSide 2.. Functionally, part of the Sec protein translocase complex. Interacts with the SecYEG preprotein conducting channel. Has a central role in coupling the hydrolysis of ATP to the transfer of proteins into and across the cell membrane, serving both as a receptor for the preprotein-SecB complex and as an ATP-driven molecular motor driving the stepwise translocation of polypeptide chains across the membrane. This Burkholderia pseudomallei (strain K96243) protein is Protein translocase subunit SecA.